We begin with the raw amino-acid sequence, 119 residues long: Small ribosomal subunit protein uS10 (119 aa).

The residue at position 2 (Ala-2) is an N-acetylalanine. Lys-4 is covalently cross-linked (Glycyl lysine isopeptide (Lys-Gly) (interchain with G-Cter in ubiquitin)). Lys-8 is modified (N6-succinyllysine; alternate). Lys-8 participates in a covalent cross-link: Glycyl lysine isopeptide (Lys-Gly) (interchain with G-Cter in ubiquitin); alternate. Thr-9 is modified (phosphothreonine). An N6-acetyllysine mark is found at Lys-34 and Lys-75. Residue Ser-93 is modified to Phosphoserine.

It belongs to the universal ribosomal protein uS10 family. In terms of assembly, component of the 40S small ribosomal subunit. In terms of processing, polyubiquitinated by ZNF598 via 'Lys-63'-linked ubiquitin chains when a ribosome has stalled, initiating the ribosome quality control (RQC) pathway to degrade the potentially detrimental aberrant nascent polypeptide. Deubiquitinated by OTUD3 and USP21, antagonizing ZNF598 activity. Post-translationally, ufmylated by UFL1.

The protein localises to the cytoplasm. Functionally, component of the small ribosomal subunit. The ribosome is a large ribonucleoprotein complex responsible for the synthesis of proteins in the cell. The polypeptide is Small ribosomal subunit protein uS10 (RPS20) (Sus scrofa (Pig)).